The chain runs to 89 residues: Defensin-like protein 250 (89 aa).

Residues 1-23 (MKLAAIFLVSCVLLSLLPSLTIA) form the signal peptide. Cystine bridges form between cysteine 29/cysteine 86, cysteine 40/cysteine 69, cysteine 48/cysteine 79, and cysteine 67/cysteine 81.

It belongs to the DEFL family.

The protein resides in the secreted. In Arabidopsis thaliana (Mouse-ear cress), this protein is Defensin-like protein 250 (SCRL8).